The primary structure comprises 191 residues: Putative 3-methyladenine DNA glycosylase (191 aa).

The protein belongs to the DNA glycosylase MPG family.

This Carboxydothermus hydrogenoformans (strain ATCC BAA-161 / DSM 6008 / Z-2901) protein is Putative 3-methyladenine DNA glycosylase.